Here is a 98-residue protein sequence, read N- to C-terminus: Co-chaperonin GroES (98 aa).

Belongs to the GroES chaperonin family. As to quaternary structure, heptamer of 7 subunits arranged in a ring. Interacts with the chaperonin GroEL.

Its subcellular location is the cytoplasm. Its function is as follows. Together with the chaperonin GroEL, plays an essential role in assisting protein folding. The GroEL-GroES system forms a nano-cage that allows encapsulation of the non-native substrate proteins and provides a physical environment optimized to promote and accelerate protein folding. GroES binds to the apical surface of the GroEL ring, thereby capping the opening of the GroEL channel. The protein is Co-chaperonin GroES of Paenarthrobacter aurescens (strain TC1).